The primary structure comprises 560 residues: Phosphoglucomutase 1 (560 aa).

Arginine 24 and serine 116 together coordinate alpha-D-glucose 1,6-bisphosphate. Serine 116 serves as the catalytic Phosphoserine intermediate. Positions 116, 288, 290, and 292 each coordinate Mg(2+). A Phosphoserine modification is found at serine 116. Alpha-D-glucose 1,6-bisphosphate-binding residues include aspartate 292, arginine 293, threonine 357, glutamate 376, serine 378, and lysine 389.

Belongs to the phosphohexose mutase family. In terms of assembly, monomer. Requires Mg(2+) as cofactor. In terms of tissue distribution, localized primarily to fat bodies in third instar larvae.

The catalysed reaction is alpha-D-glucose 1-phosphate = alpha-D-glucose 6-phosphate. The enzyme catalyses O-phospho-L-seryl-[protein] + alpha-D-glucose 1-phosphate = alpha-D-glucose 1,6-bisphosphate + L-seryl-[protein]. It carries out the reaction alpha-D-glucose 1,6-bisphosphate + L-seryl-[protein] = O-phospho-L-seryl-[protein] + alpha-D-glucose 6-phosphate. In terms of biological role, catalyzes the reversible isomerization of alpha-D-glucose 1-phosphate to alpha-D-glucose 6-phosphate. The mechanism proceeds via the intermediate compound alpha-D-glucose 1,6-bisphosphate. This enzyme participates in both the breakdown and synthesis of glucose. Enzyme of the glycolytic pathway. Glycolysis is essential in glial cells but not in neurons; neurons rely on the citric acid cycle for their energy needs, and on lactate and alanine secreted into the hemolymph by glial cells to fuel it. The chain is Phosphoglucomutase 1 from Drosophila melanogaster (Fruit fly).